The sequence spans 210 residues: Large ribosomal subunit protein uL4 (210 aa).

Over residues 44-54 the composition is skewed to polar residues; it reads KRQGTASTLTR. Residues 44-94 form a disordered region; that stretch reads KRQGTASTLTRSEVRGGGRKPYKQKGTGRARQGSIRTPLRPGGGVIFGPKP. The span at 60 to 71 shows a compositional bias: basic residues; the sequence is GGRKPYKQKGTG.

It belongs to the universal ribosomal protein uL4 family. In terms of assembly, part of the 50S ribosomal subunit.

Functionally, one of the primary rRNA binding proteins, this protein initially binds near the 5'-end of the 23S rRNA. It is important during the early stages of 50S assembly. It makes multiple contacts with different domains of the 23S rRNA in the assembled 50S subunit and ribosome. In terms of biological role, forms part of the polypeptide exit tunnel. This chain is Large ribosomal subunit protein uL4, found in Prochlorococcus marinus subsp. pastoris (strain CCMP1986 / NIES-2087 / MED4).